The sequence spans 574 residues: K(+)/H(+) antiporter NhaP2 (574 aa).

Transmembrane regions (helical) follow at residues 6–26 (INSF…LSPM), 34–54 (ILLI…GGIL), 58–78 (YSTA…DGGM), 87–107 (VALW…TSIT), 109–129 (VMAA…GAIV), 173–193 (IAIL…ISFI), 196–216 (FGLG…LVNV), 219–239 (LAEG…YATS), 242–262 (LGGS…NKPT), 271–291 (VLDG…GLLL), 299–319 (IWLP…PLAV), 335–355 (WFIS…VFPM), and 359–379 (LPGA…SLLV). The region spanning 405–486 (SGVEIYPKSE…LEALSNLFSQ (82 aa)) is the RCK C-terminal domain.

Belongs to the monovalent cation:proton antiporter 1 (CPA1) transporter (TC 2.A.36) family. NhaP2 subfamily.

The protein localises to the cell inner membrane. The catalysed reaction is K(+)(in) + H(+)(out) = K(+)(out) + H(+)(in). Its function is as follows. K(+)/H(+) antiporter that extrudes potassium in exchange for external protons and maintains the internal concentration of potassium under toxic levels. In Shewanella oneidensis (strain ATCC 700550 / JCM 31522 / CIP 106686 / LMG 19005 / NCIMB 14063 / MR-1), this protein is K(+)/H(+) antiporter NhaP2.